Consider the following 1074-residue polypeptide: Phospholipase D1 (1074 aa).

Residues 81 to 212 form the PX domain; that stretch reads IKAQVLEVER…TEFLDVSQLS (132 aa). The region spanning 219-328 is the PH domain; sequence PKGLEGMIMK…WGGAIEEFIR (110 aa). Residues Cys-240 and Cys-241 are each lipidated (S-palmitoyl cysteine). Residues 459–486 form the PLD phosphodiesterase 1 domain; that stretch reads YLWAHHEKLVIIDQSVAFVGGIDLAYGR. Residues 463–928 form a catalytic region; sequence HHEKLVIIDQ…MLGKRDSEMA (466 aa). 3 positions are modified to phosphoserine: Ser-499, Ser-561, and Ser-629. A PLD phosphodiesterase 2 domain is found at 891–918; sequence ELIYVHSKLLIADDNTVIIGSANINDRS.

The protein belongs to the phospholipase D family. Interacts with PIP5K1B. In terms of tissue distribution, expressed in kidney, lung, and at a much lower levels, in brain, liver, heart, testis and spleen.

Its subcellular location is the cytoplasm. It is found in the perinuclear region. It localises to the endoplasmic reticulum membrane. The protein localises to the golgi apparatus membrane. The protein resides in the late endosome membrane. It catalyses the reaction a 1,2-diacyl-sn-glycero-3-phosphocholine + H2O = a 1,2-diacyl-sn-glycero-3-phosphate + choline + H(+). It carries out the reaction ethanol + a 1,2-diacyl-sn-glycero-3-phosphocholine = 1,2-diacyl-sn-glycero-3-phosphoethanol + choline. The catalysed reaction is 1,2-dihexadecanoyl-sn-glycero-3-phosphocholine + H2O = 1,2-dihexadecanoyl-sn-glycero-3-phosphate + choline + H(+). Its activity is regulated as follows. Stimulated by phosphatidylinositol 4,5-bisphosphate and phosphatidylinositol 3,4,5-trisphosphate, activated by the phosphokinase C-alpha, by the ADP-ribosylation factor-1 (ARF-1), and to a lesser extent by GTP-binding proteins: RHO A, RAC-1 and CDC42. Inhibited by oleate. Functionally, function as phospholipase selectivefor phosphatidylcholine. Implicated as a critical step in numerous cellular pathways, including signal transduction, membrane trafficking, and the regulation of mitosis. May be involved in the regulation of perinuclear intravesicular membrane traffic. The chain is Phospholipase D1 from Mus musculus (Mouse).